A 327-amino-acid polypeptide reads, in one-letter code: MERKVSRISLASEPNITYFLQVSWEETVGSGFVITLTDGHSAWTATVSESEISQEADDMAMEKEKYADELRKALVSGSGSDTYKFIFSRESCHFSLEKELKDVSFRLGSFNLDKVPNSTEVIRELICYCLDTIAEKQAKNEHLQKENDRLLRDWNDVQGRFEKCVIAKEALEADLYQRFILVLNEKKTKIRSLHKLLDEIQQLEKNLKPERETKCSEKTTDQDAIYDGSTDEEAGASVLAEAAVCKEDSLFSSPDVTDIAPSRKRRHHMQKNLGTEPKMAPQEQQLQGKERLASSLPHTLKEEHEHTSAGNMSLETLRNSSPEDIFD.

The segment at 1–211 is interaction with IFFO1; the sequence is MERKVSRISL…QLEKNLKPER (211 aa). Ser53 is modified (phosphoserine). Coiled coils occupy residues 133 to 153 and 183 to 213; these read IAEKQAKNEHLQKENDRLLRD and LNEKKTKIRSLHKLLDEIQQLEKNLKPERET. Interaction with LIG4 stretches follow at residues 179–210 and 179–211; these read FILVLNEKKTKIRSLHKLLDEIQQLEKNLKPE and FILVLNEKKTKIRSLHKLLDEIQQLEKNLKPER. Ser192 is modified (phosphoserine). Residue Lys208 forms a Glycyl lysine isopeptide (Lys-Gly) (interchain with G-Cter in SUMO) linkage. At Tyr226 the chain carries Phosphotyrosine. Ser229 is modified (phosphoserine). Thr230 carries the post-translational modification Phosphothreonine. Phosphoserine is present on residues Ser249 and Ser253. A disordered region spans residues 255 to 327; sequence DVTDIAPSRK…RNSSPEDIFD (73 aa). The short motif at 263–268 is the Nuclear localization signal element; the sequence is RKRRHH. Lys289 participates in a covalent cross-link: Glycyl lysine isopeptide (Lys-Gly) (interchain with G-Cter in ubiquitin). A phosphoserine mark is found at Ser294, Ser295, Ser308, and Ser313. Positions 308 to 327 are enriched in polar residues; the sequence is SAGNMSLETLRNSSPEDIFD. Thr316 bears the Phosphothreonine mark. 2 positions are modified to phosphoserine: Ser320 and Ser321.

The protein belongs to the XRCC4-XLF family. XRCC4 subfamily. In terms of assembly, homodimer and homotetramer in solution. Interacts with NHEJ1/XLF; the interaction is direct and is mediated via a head-to-head interaction between N-terminal head regions. Interacts with LIG4; the LIG4-XRCC4 subcomplex has a 1:2 stoichiometry and XRCC4 is required for LIG4 stability. Component of the core long-range non-homologous end joining (NHEJ) complex (also named DNA-PK complex) composed of PRKDC, LIG4, XRCC4, XRCC6/Ku70, XRCC5/Ku86 and NHEJ1/XLF. Additional component of the NHEJ complex includes PAXX. Following autophosphorylation, PRKDC dissociates from DNA, leading to formation of the short-range NHEJ complex, composed of LIG4, XRCC4, XRCC6/Ku70, XRCC5/Ku86 and NHEJ1/XLF. Interacts with PRKDC; the interaction is direct. Interacts with XRCC6/Ku70; the interaction is direct. Interacts with APTX and APLF. Forms a heterotetramer with IFFO1; the interaction involves LIG4-free XRCC4 and leads to the relocalization of IFFO1 to the sites of DNA damage. Interacts with PNKP; mainly interacts with PNKP when phosphorylated at Thr-230, but is also able to interact at much lower level with PNKP when not unphosphorylated. Interacts with POLL (DNA polymerase lambda). Interacts with XKR4; interacts with the processed form of XKR4, which is cleaved by caspase. In terms of processing, phosphorylated by PRKDC at the C-terminus in response to DNA damage; Ser-253 constitutes the main phosphorylation sites. Phosphorylations by PRKDC at the C-terminus of XRCC4 and NHEJ1/XLF are highly redundant and regulate ability of the XRCC4-NHEJ1/XLF subcomplex to bridge DNA. Phosphorylation by PRKDC does not prevent interaction with NHEJ1/XLF but disrupts ability to bridge DNA and promotes detachment from DNA. Phosphorylation at Ser-320 and Ser-321 by PRKDC promotes recognition by the SCF(FBXW7) complex and subsequent ubiquitination via 'Lys-63'-linked ubiquitin. Phosphorylation at Thr-230 by CK2 promotes interaction with PNKP; regulating PNKP activity and localization to DNA damage sites. Phosphorylation by CK2 promotes interaction with APTX. Post-translationally, ubiquitinated at Lys-289 by the SCF(FBXW7) complex via 'Lys-63'-linked ubiquitination, thereby promoting double-strand break repair: the SCF(FBXW7) complex specifically recognizes XRCC4 when phosphorylated at Ser-320 and Ser-321 by PRKDC, and 'Lys-63'-linked ubiquitination facilitates DNA non-homologous end joining (NHEJ) by enhancing association with XRCC5/Ku80 and XRCC6/Ku70. Monoubiquitinated. Undergoes proteolytic processing by caspase-3 (CASP3). This generates the protein XRCC4, C-terminus (XRCC4/C), which translocates to the cytoplasm and activates phospholipid scramblase activity of XKR4, thereby promoting phosphatidylserine exposure on apoptotic cell surface.

It localises to the nucleus. Its subcellular location is the chromosome. It is found in the cytoplasm. DNA non-homologous end joining (NHEJ) core factor, required for double-strand break repair and V(D)J recombination. Acts as a scaffold protein that regulates recruitment of other proteins to DNA double-strand breaks (DSBs). Associates with NHEJ1/XLF to form alternating helical filaments that bridge DNA and act like a bandage, holding together the broken DNA until it is repaired. The XRCC4-NHEJ1/XLF subcomplex binds to the DNA fragments of a DSB in a highly diffusive manner and robustly bridges two independent DNA molecules, holding the broken DNA fragments in close proximity to one other. The mobility of the bridges ensures that the ends remain accessible for further processing by other repair factors. Plays a key role in the NHEJ ligation step of the broken DNA during DSB repair via direct interaction with DNA ligase IV (LIG4): the LIG4-XRCC4 subcomplex reseals the DNA breaks after the gap filling is completed. XRCC4 stabilizes LIG4, regulates its subcellular localization and enhances LIG4's joining activity. Binding of the LIG4-XRCC4 subcomplex to DNA ends is dependent on the assembly of the DNA-dependent protein kinase complex DNA-PK to these DNA ends. Promotes displacement of PNKP from processed strand break termini. In terms of biological role, acts as an activator of the phospholipid scramblase activity of XKR4. This form, which is generated upon caspase-3 (CASP3) cleavage, translocates into the cytoplasm and interacts with XKR4, thereby promoting phosphatidylserine scramblase activity of XKR4 and leading to phosphatidylserine exposure on apoptotic cell surface. In Cricetulus griseus (Chinese hamster), this protein is DNA repair protein XRCC4.